The chain runs to 291 residues: Acidic endochitinase (291 aa).

The signal sequence occupies residues 1 to 22 (MIKYSFLLTALVLFLRALKLEA). The GH18 domain maps to 23-291 (GDIVIYWGQN…GYSSAIKANV (269 aa)). 2 disulfide bridges follow: C42–C89 and C72–C79. E149 acts as the Proton donor in catalysis. A disulfide bridge connects residues C180 and C209.

The protein belongs to the glycosyl hydrolase 18 family. Chitinase class II subfamily.

The protein resides in the secreted. The protein localises to the cell wall. The enzyme catalyses Random endo-hydrolysis of N-acetyl-beta-D-glucosaminide (1-&gt;4)-beta-linkages in chitin and chitodextrins.. In terms of biological role, this protein functions as a defense against chitin containing fungal pathogens. The sequence is that of Acidic endochitinase from Nicotiana tabacum (Common tobacco).